The primary structure comprises 197 residues: Putative RING-H2 finger protein ATL71 (197 aa).

The chain crosses the membrane as a helical span at residues 20–40 (MGGLAYGIGVSIGILMLITTI). The interval 53–80 (SASPTTTPRTRRRQRESNGTLPPGQERF) is disordered. The segment at 129–171 (CSICLADYKKMDMIRVLPDCNHLFHDNCVDPWLRLHPTCPVCR) adopts an RING-type; atypical zinc-finger fold.

This sequence belongs to the RING-type zinc finger family. ATL subfamily.

It localises to the membrane. It carries out the reaction S-ubiquitinyl-[E2 ubiquitin-conjugating enzyme]-L-cysteine + [acceptor protein]-L-lysine = [E2 ubiquitin-conjugating enzyme]-L-cysteine + N(6)-ubiquitinyl-[acceptor protein]-L-lysine.. The protein operates within protein modification; protein ubiquitination. This is Putative RING-H2 finger protein ATL71 (ATL71) from Arabidopsis thaliana (Mouse-ear cress).